Here is a 259-residue protein sequence, read N- to C-terminus: tRNA (guanine-N(1)-)-methyltransferase (259 aa).

S-adenosyl-L-methionine-binding positions include Gly113 and 133–138 (IGDYVL).

It belongs to the RNA methyltransferase TrmD family. Homodimer.

It localises to the cytoplasm. It catalyses the reaction guanosine(37) in tRNA + S-adenosyl-L-methionine = N(1)-methylguanosine(37) in tRNA + S-adenosyl-L-homocysteine + H(+). Functionally, specifically methylates guanosine-37 in various tRNAs. The protein is tRNA (guanine-N(1)-)-methyltransferase of Xanthomonas oryzae pv. oryzae (strain MAFF 311018).